We begin with the raw amino-acid sequence, 462 residues long: tRNA(Ile)-lysidine synthase (462 aa).

26 to 31 (SGGVDS) provides a ligand contact to ATP.

The protein belongs to the tRNA(Ile)-lysidine synthase family.

Its subcellular location is the cytoplasm. It catalyses the reaction cytidine(34) in tRNA(Ile2) + L-lysine + ATP = lysidine(34) in tRNA(Ile2) + AMP + diphosphate + H(+). In terms of biological role, ligates lysine onto the cytidine present at position 34 of the AUA codon-specific tRNA(Ile) that contains the anticodon CAU, in an ATP-dependent manner. Cytidine is converted to lysidine, thus changing the amino acid specificity of the tRNA from methionine to isoleucine. The polypeptide is tRNA(Ile)-lysidine synthase (Enterococcus faecalis (strain ATCC 700802 / V583)).